A 243-amino-acid polypeptide reads, in one-letter code: MRSRKLTGAVRSSARLKARSCSAARLASAQEVAGSTSAKTACLTSSSHKATDTRTSKKFKCDKGHLVKSELQKLVPKNDSASLPKVTPETPCENEFAEGSALLPGSEAGVSVQQGAASLPLGGCRVVSDSRLAKTRDGLSVPKHSAGSGAEESNSSSTVQKQNEPGLQTEDVQKPPLQMDNSVFLDDDSNQPMPVSRFFGNVELMQDLPPASSSCPSMSRREFRKMHFRAKDDDDDDDDDAEM.

2 disordered regions span residues 78–100 (NDSASLPKVTPETPCENEFAEGS) and 132–243 (LAKT…DAEM). A compositionally biased stretch (low complexity) spans 145 to 157 (SAGSGAEESNSSS). Phosphoserine is present on residues serine 148 and serine 189. A compositionally biased stretch (acidic residues) spans 233–243 (DDDDDDDDAEM).

Belongs to the UPF0688 family.

The protein resides in the nucleus. In Homo sapiens (Human), this protein is UPF0688 protein C1orf174 (C1orf174).